We begin with the raw amino-acid sequence, 530 residues long: Lanosterol 14-alpha demethylase CYP51 (530 aa).

Residues 1–20 (MSATKSIVGEALEYVNIGLS) are Lumenal-facing. The chain crosses the membrane as a helical span at residues 21–41 (HFLALPLAQRISLIIIIPFIY). Over 42–530 (NIVWQLLYSL…WEKRNPEQKI (489 aa)) the chain is Cytoplasmic. Lys116 participates in a covalent cross-link: Glycyl lysine isopeptide (Lys-Gly) (interchain with G-Cter in ubiquitin). Residue Tyr126 coordinates lanosterol. Itraconazole is bound at residue Gly314. Residues Lys353 and Lys454 each participate in a glycyl lysine isopeptide (Lys-Gly) (interchain with G-Cter in ubiquitin) cross-link. Ser458 bears the Phosphoserine mark. Heme is bound at residue Cys470.

It belongs to the cytochrome P450 family. In terms of assembly, interacts with ERG28. Heme is required as a cofactor.

The protein localises to the endoplasmic reticulum membrane. The enzyme catalyses a 14alpha-methyl steroid + 3 reduced [NADPH--hemoprotein reductase] + 3 O2 = a Delta(14) steroid + formate + 3 oxidized [NADPH--hemoprotein reductase] + 4 H2O + 4 H(+). It carries out the reaction a 14alpha-methyl steroid + reduced [NADPH--hemoprotein reductase] + O2 = a 14alpha-hydroxymethyl steroid + oxidized [NADPH--hemoprotein reductase] + H2O + H(+). The catalysed reaction is a 14alpha-hydroxymethyl steroid + reduced [NADPH--hemoprotein reductase] + O2 = a 14alpha-formyl steroid + oxidized [NADPH--hemoprotein reductase] + 2 H2O + H(+). It catalyses the reaction a 14alpha-formyl steroid + reduced [NADPH--hemoprotein reductase] + O2 = a Delta(14) steroid + formate + oxidized [NADPH--hemoprotein reductase] + H2O + 2 H(+). The enzyme catalyses lanosterol + 3 reduced [NADPH--hemoprotein reductase] + 3 O2 = 4,4-dimethyl-5alpha-cholesta-8,14,24-trien-3beta-ol + formate + 3 oxidized [NADPH--hemoprotein reductase] + 4 H2O + 4 H(+). It carries out the reaction lanosterol + reduced [NADPH--hemoprotein reductase] + O2 = 32-hydroxylanosterol + oxidized [NADPH--hemoprotein reductase] + H2O + H(+). The catalysed reaction is 32-hydroxylanosterol + reduced [NADPH--hemoprotein reductase] + O2 = 32-oxolanosterol + oxidized [NADPH--hemoprotein reductase] + 2 H2O + H(+). It catalyses the reaction 32-oxolanosterol + reduced [NADPH--hemoprotein reductase] + O2 = 4,4-dimethyl-5alpha-cholesta-8,14,24-trien-3beta-ol + formate + oxidized [NADPH--hemoprotein reductase] + H2O + 2 H(+). It participates in steroid biosynthesis; zymosterol biosynthesis; zymosterol from lanosterol: step 1/6. In terms of biological role, sterol 14alpha-demethylase that plays a critical role in the third module of ergosterol biosynthesis pathway, being ergosterol the major sterol component in fungal membranes that participates in a variety of functions. The third module or late pathway involves the ergosterol synthesis itself through consecutive reactions that mainly occur in the endoplasmic reticulum (ER) membrane. Starting from lanosterol (lanosta-8,24-dien-3beta-ol), it catalyzes the three-step oxidative removal of the 14alpha-methyl group (C-32) of the sterol in the form of formate, and converts the sterol to 4,4-dimethyl-5alpha-cholesta-8,14,24-trien-3beta-ol, which is critical for ergosterol biosynthesis. Can demethylate substrates not intrinsic to yeast, such as eburicol (24-methylene-24,25-dihydrolanosterol) at a similar rate to lanosterol, and at a lower rate the 24,25-dihydrolanosterol (DHL) to 4,4-dimethyl-8,14-cholestadien-3beta-ol. In Saccharomyces cerevisiae (strain ATCC 204508 / S288c) (Baker's yeast), this protein is Lanosterol 14-alpha demethylase CYP51.